Here is a 143-residue protein sequence, read N- to C-terminus: Putative pre-16S rRNA nuclease (143 aa).

It belongs to the YqgF nuclease family.

The protein localises to the cytoplasm. In terms of biological role, could be a nuclease involved in processing of the 5'-end of pre-16S rRNA. The chain is Putative pre-16S rRNA nuclease from Ralstonia pickettii (strain 12J).